We begin with the raw amino-acid sequence, 655 residues long: Polycyclic ketone monooxygenase (655 aa).

FAD is bound by residues Gly-89, Asp-113, Ala-114, Thr-121, Trp-124, Cys-132, Asp-133, Tyr-139, and Val-183. NADPH contacts are provided by Thr-277, Thr-280, Thr-301, Lys-425, and Val-452. A disulfide bond links Cys-424 and Cys-596. FAD is bound by residues Thr-492 and Asn-541. Tyr-600 lines the NADPH pocket.

This sequence belongs to the FAD-binding monooxygenase family. FAD is required as a cofactor.

In terms of biological role, polycyclic ketone monooxygenase (PockeMO) that displays excellent enantioselectivity, acts on various ketones, and is particularly active on polycyclic molecules. Breaks C-C bonds through the insertion of a single oxygen atom adjacent to a carbonyl moiety, yielding esters or lactones from ketones. PockeMO is able to convert linear ketones (including cyclohexane and to a lesser extend 4-octanone), cyclic ketones (including cyclohexanone and cyclooctanone), bicyclic ketones and polycyclic ketones (steroids). Performs oxidation of the keto functionalities at both the A and D rings of steroids. Particularly, oxidizes the A ring of stanolone or pregnenolone. Selectively oxidizes the D ring of androstenedione or androstadienedione, steroids with keto groups in both the A and D rings, to yield the pharmaceutically relevant testo(lo)lactone. The protein is Polycyclic ketone monooxygenase of Thermothelomyces thermophilus (strain ATCC 42464 / BCRC 31852 / DSM 1799) (Sporotrichum thermophile).